Consider the following 179-residue polypeptide: Large ribosomal subunit protein uL5 (179 aa).

Belongs to the universal ribosomal protein uL5 family. In terms of assembly, part of the 50S ribosomal subunit; part of the 5S rRNA/L5/L18/L25 subcomplex. Contacts the 5S rRNA and the P site tRNA. Forms a bridge to the 30S subunit in the 70S ribosome.

In terms of biological role, this is one of the proteins that bind and probably mediate the attachment of the 5S RNA into the large ribosomal subunit, where it forms part of the central protuberance. In the 70S ribosome it contacts protein S13 of the 30S subunit (bridge B1b), connecting the 2 subunits; this bridge is implicated in subunit movement. Contacts the P site tRNA; the 5S rRNA and some of its associated proteins might help stabilize positioning of ribosome-bound tRNAs. The protein is Large ribosomal subunit protein uL5 of Shewanella woodyi (strain ATCC 51908 / MS32).